A 231-amino-acid chain; its full sequence is Trypsin (231 aa).

Residues 1-8 (FPTDDDDK) constitute a propeptide, activation peptide. The Peptidase S1 domain occupies 9–229 (IVGGYTCAAN…YVNWIQQTIA (221 aa)). 6 disulfide bridges follow: Cys-15/Cys-145, Cys-33/Cys-49, Cys-117/Cys-218, Cys-124/Cys-191, Cys-156/Cys-170, and Cys-181/Cys-205. His-48 serves as the catalytic Charge relay system. Ca(2+) is bound by residues Glu-60, Asn-62, Val-65, and Glu-70. Asp-92 acts as the Charge relay system in catalysis. The active-site Charge relay system is the Ser-185.

Belongs to the peptidase S1 family. The cofactor is Ca(2+).

It localises to the secreted. It is found in the extracellular space. It carries out the reaction Preferential cleavage: Arg-|-Xaa, Lys-|-Xaa.. In Sus scrofa (Pig), this protein is Trypsin.